The chain runs to 963 residues: Protein translocase subunit SecA (963 aa).

Residues Q87, 105-109 (GEGKT), and D524 each bind ATP. C946, C948, C957, and H958 together coordinate Zn(2+).

Belongs to the SecA family. As to quaternary structure, monomer and homodimer. Part of the essential Sec protein translocation apparatus which comprises SecA, SecYEG and auxiliary proteins SecDF-YajC and YidC. Zn(2+) serves as cofactor.

The protein resides in the cell inner membrane. It localises to the cytoplasm. It carries out the reaction ATP + H2O + cellular proteinSide 1 = ADP + phosphate + cellular proteinSide 2.. Its function is as follows. Part of the Sec protein translocase complex. Interacts with the SecYEG preprotein conducting channel. Has a central role in coupling the hydrolysis of ATP to the transfer of proteins into and across the cell membrane, serving both as a receptor for the preprotein-SecB complex and as an ATP-driven molecular motor driving the stepwise translocation of polypeptide chains across the membrane. The sequence is that of Protein translocase subunit SecA from Methylobacterium radiotolerans (strain ATCC 27329 / DSM 1819 / JCM 2831 / NBRC 15690 / NCIMB 10815 / 0-1).